We begin with the raw amino-acid sequence, 176 residues long: MTTATMDLKQHIRGIPDFPKPGILFYDISTLMRNADAWQVAMGRLTHAVAPWAPDMLAAIESRGFLTAAPLASNLGCGLVMLRKPGKLPGETVSHTYDLEYGSDTLHIQADAIRPGQRVVVMDDLLATGGTLAASVALLRKVGADVVGASVLVELRALGGRQRLDVPVQALISYDD.

This sequence belongs to the purine/pyrimidine phosphoribosyltransferase family. In terms of assembly, homodimer.

It localises to the cytoplasm. It catalyses the reaction AMP + diphosphate = 5-phospho-alpha-D-ribose 1-diphosphate + adenine. It functions in the pathway purine metabolism; AMP biosynthesis via salvage pathway; AMP from adenine: step 1/1. Catalyzes a salvage reaction resulting in the formation of AMP, that is energically less costly than de novo synthesis. This chain is Adenine phosphoribosyltransferase, found in Gluconacetobacter diazotrophicus (strain ATCC 49037 / DSM 5601 / CCUG 37298 / CIP 103539 / LMG 7603 / PAl5).